Here is a 712-residue protein sequence, read N- to C-terminus: Translation initiation factor eIF2B subunit epsilon (712 aa).

Residues M1 to D20 form a disordered region. 6 positions are modified to phosphoserine: S478, S481, S507, S525, S538, and S707. The 172-residue stretch at E539–E710 folds into the W2 domain.

It belongs to the eIF-2B gamma/epsilon subunits family. Component of the translation initiation factor 2B (eIF2B) complex which is a heterodecamer of two sets of five different subunits: alpha, beta, gamma, delta and epsilon. Subunits alpha, beta and delta comprise a regulatory subcomplex and subunits epsilon and gamma comprise a catalytic subcomplex. Within the complex, the hexameric regulatory complex resides at the center, with the two heterodimeric catalytic subcomplexes bound on opposite sides.

The protein localises to the cytoplasm. It localises to the cytosol. Its function is as follows. Acts as a catalytic component of the translation initiation factor 2B (eIF2B) complex, which catalyzes the exchange of GDP for GTP on eukaryotic initiation factor 2 (eIF2) and is regulated by phosphorylated eIF2. Its guanine nucleotide exchange factor activity is repressed when bound to eIF2 complex phosphorylated on the alpha subunit, thereby limiting the amount of methionyl-initiator methionine tRNA available to the ribosome and consequently global translation is repressed. It activates the synthesis of GCN4 in yeast under amino acid starvation conditions by suppressing the inhibitory effects of multiple AUG codons present in the leader of GCN4 mRNA. It may promote either repression or activation of GCN4 expression depending on amino acid availability. GCD6 and GCD7 repress GCN4 expression at the translational level by ensuring that ribosomes which have translated UORF1 will reinitiate at UORF2, -3, or -4 and thus fail to reach the GCN4 start site. This chain is Translation initiation factor eIF2B subunit epsilon (GCD6), found in Saccharomyces cerevisiae (strain ATCC 204508 / S288c) (Baker's yeast).